Consider the following 238-residue polypeptide: Ribosomal RNA small subunit methyltransferase G (238 aa).

Residues G106, L111, 157–158 (IE), and R170 contribute to the S-adenosyl-L-methionine site.

This sequence belongs to the methyltransferase superfamily. RNA methyltransferase RsmG family.

Its subcellular location is the cytoplasm. The catalysed reaction is guanosine(527) in 16S rRNA + S-adenosyl-L-methionine = N(7)-methylguanosine(527) in 16S rRNA + S-adenosyl-L-homocysteine. Functionally, specifically methylates the N7 position of guanine in position 527 of 16S rRNA. This chain is Ribosomal RNA small subunit methyltransferase G, found in Psychrobacter arcticus (strain DSM 17307 / VKM B-2377 / 273-4).